Consider the following 62-residue polypeptide: Bacteriocin lactacin-F subunit LafX (62 aa).

A propeptide spanning residues 1-14 (MKLNDKELSKIVGG) is cleaved from the precursor.

The protein belongs to the bacteriocin class IIB family. In terms of assembly, this bacteriocin depends upon the complementation of two peptides for activity: LafA and LafX. Associated with a 180 kDa bacteriocin complex.

Functionally, heat stable bacteriocin active against Enterococcus faecalis and other Lactobacilli. The sequence is that of Bacteriocin lactacin-F subunit LafX (lafX) from Lactobacillus johnsonii (strain CNCM I-12250 / La1 / NCC 533).